The primary structure comprises 73 residues: Translation initiation factor IF-1 (73 aa).

The 73-residue stretch at 1-73 folds into the S1-like domain; it reads MPKKDGAIEI…TRGRIVYRYK (73 aa).

The protein belongs to the IF-1 family. Component of the 30S ribosomal translation pre-initiation complex which assembles on the 30S ribosome in the order IF-2 and IF-3, IF-1 and N-formylmethionyl-tRNA(fMet); mRNA recruitment can occur at any time during PIC assembly.

The protein localises to the cytoplasm. Its function is as follows. One of the essential components for the initiation of protein synthesis. Stabilizes the binding of IF-2 and IF-3 on the 30S subunit to which N-formylmethionyl-tRNA(fMet) subsequently binds. Helps modulate mRNA selection, yielding the 30S pre-initiation complex (PIC). Upon addition of the 50S ribosomal subunit IF-1, IF-2 and IF-3 are released leaving the mature 70S translation initiation complex. This Salinispora arenicola (strain CNS-205) protein is Translation initiation factor IF-1.